The following is a 474-amino-acid chain: Glutamate--tRNA ligase (474 aa).

Positions 9–19 (PSPTGYLHVGG) match the 'HIGH' region motif. The 'KMSKS' region signature appears at 240-244 (KLSKR). Residue Lys243 participates in ATP binding.

This sequence belongs to the class-I aminoacyl-tRNA synthetase family. Glutamate--tRNA ligase type 1 subfamily. As to quaternary structure, monomer.

It localises to the cytoplasm. It carries out the reaction tRNA(Glu) + L-glutamate + ATP = L-glutamyl-tRNA(Glu) + AMP + diphosphate. Catalyzes the attachment of glutamate to tRNA(Glu) in a two-step reaction: glutamate is first activated by ATP to form Glu-AMP and then transferred to the acceptor end of tRNA(Glu). The sequence is that of Glutamate--tRNA ligase from Vibrio cholerae serotype O1 (strain ATCC 39315 / El Tor Inaba N16961).